A 348-amino-acid polypeptide reads, in one-letter code: Histidinol-phosphate aminotransferase (348 aa).

K210 carries the N6-(pyridoxal phosphate)lysine modification.

The protein belongs to the class-II pyridoxal-phosphate-dependent aminotransferase family. Histidinol-phosphate aminotransferase subfamily. As to quaternary structure, homodimer. It depends on pyridoxal 5'-phosphate as a cofactor.

The enzyme catalyses L-histidinol phosphate + 2-oxoglutarate = 3-(imidazol-4-yl)-2-oxopropyl phosphate + L-glutamate. It participates in amino-acid biosynthesis; L-histidine biosynthesis; L-histidine from 5-phospho-alpha-D-ribose 1-diphosphate: step 7/9. This chain is Histidinol-phosphate aminotransferase, found in Pseudomonas putida (strain ATCC 47054 / DSM 6125 / CFBP 8728 / NCIMB 11950 / KT2440).